The primary structure comprises 85 residues: Protein C4 (85 aa).

Gly-2 carries N-myristoyl glycine; by host lipidation. Residues 42–65 (LNPAPTSTPTSTRTETLSNGENSR) form a disordered region. Residues 44-59 (PAPTSTPTSTRTETLS) show a composition bias toward low complexity.

The protein belongs to the geminiviridae protein AC4/C4 family.

It is found in the host cell membrane. In terms of biological role, pathogenicity determinant. May act as a suppressor of RNA-mediated gene silencing, also known as post-transcriptional gene silencing (PTGS), a mechanism of plant viral defense that limits the accumulation of viral RNAs. The polypeptide is Protein C4 (Solanum lycopersicum (Tomato)).